The sequence spans 217 residues: Response regulator RR06 (217 aa).

Residues asparagine 2–isoleucine 115 form the Response regulatory domain. A 4-aspartylphosphate modification is found at aspartate 51. A DNA-binding region (ompR/PhoB-type) is located at residues glutamate 122–leucine 217.

In terms of processing, phosphorylated at threonine residues by StkP; threonine phosphorylation enhances RR06 binding to DNA and may also increase expression of CbpA. May be de-phosphorylated by PhpP.

Its function is as follows. Member of the two-component regulatory system HK06/RR06 involved in regulation of target genes, including choline-binding protein CbpA. Binds to the promoter region of CbpA and directly activates transcription. This chain is Response regulator RR06, found in Streptococcus pneumoniae serotype 2 (strain D39 / NCTC 7466).